The chain runs to 326 residues: DNA-directed RNA polymerase subunit alpha (326 aa).

Residues 1-230 (MLKIEKQAKA…LHLDPFLEIG (230 aa)) form an alpha N-terminal domain (alpha-NTD) region. The tract at residues 249-326 (DIQVIDDKSH…YDLEKNGSPE (78 aa)) is alpha C-terminal domain (alpha-CTD).

It belongs to the RNA polymerase alpha chain family. As to quaternary structure, homodimer. The RNAP catalytic core consists of 2 alpha, 1 beta, 1 beta' and 1 omega subunit. When a sigma factor is associated with the core the holoenzyme is formed, which can initiate transcription.

It catalyses the reaction RNA(n) + a ribonucleoside 5'-triphosphate = RNA(n+1) + diphosphate. Its function is as follows. DNA-dependent RNA polymerase catalyzes the transcription of DNA into RNA using the four ribonucleoside triphosphates as substrates. The protein is DNA-directed RNA polymerase subunit alpha of Fusobacterium nucleatum subsp. nucleatum (strain ATCC 25586 / DSM 15643 / BCRC 10681 / CIP 101130 / JCM 8532 / KCTC 2640 / LMG 13131 / VPI 4355).